Here is a 494-residue protein sequence, read N- to C-terminus: GDP-fucose protein O-fucosyltransferase 4 (494 aa).

Residues Met-1–Glu-7 are Cytoplasmic-facing. A helical; Signal-anchor for type II membrane protein membrane pass occupies residues Ala-8 to Ser-24. Residues Ser-25–Leu-494 lie on the Lumenal side of the membrane. N-linked (GlcNAc...) asparagine glycosylation occurs at Asn-167. A disulfide bridge connects residues Cys-390 and Cys-393.

It belongs to the glycosyltransferase 10 family.

Its subcellular location is the endoplasmic reticulum membrane. The enzyme catalyses L-threonyl-[protein] + GDP-beta-L-fucose = 3-O-(alpha-L-fucosyl)-L-threonyl-[protein] + GDP + H(+). It catalyses the reaction L-seryl-[protein] + GDP-beta-L-fucose = 3-O-(alpha-L-fucosyl)-L-seryl-[protein] + GDP + H(+). The protein operates within protein modification; protein glycosylation. In terms of biological role, protein O-fucosyltransferase that specifically catalyzes O-fucosylation of serine or threonine residues in EMI domains of target proteins, such as MMRN1, MMRN2 and EMID1. Attaches fucose through an O-glycosidic linkage. O-fucosylation of EMI domain-containing proteins may be required for facilitating protein folding and secretion. Also shows minor alpha-(1,3)-fucosyltransferase activity toward activity toward biantennary N-glycan acceptors. However, this was tested with a library of synthetic substrates and this activity is unsure in vivo. This chain is GDP-fucose protein O-fucosyltransferase 4 (Fut11), found in Rattus norvegicus (Rat).